Reading from the N-terminus, the 263-residue chain is Hydroxyethylthiazole kinase 1 (263 aa).

M42 contacts substrate. ATP is bound by residues K118 and T164. G191 contacts substrate.

Belongs to the Thz kinase family. Requires Mg(2+) as cofactor.

The enzyme catalyses 5-(2-hydroxyethyl)-4-methylthiazole + ATP = 4-methyl-5-(2-phosphooxyethyl)-thiazole + ADP + H(+). Its pathway is cofactor biosynthesis; thiamine diphosphate biosynthesis; 4-methyl-5-(2-phosphoethyl)-thiazole from 5-(2-hydroxyethyl)-4-methylthiazole: step 1/1. Functionally, catalyzes the phosphorylation of the hydroxyl group of 4-methyl-5-beta-hydroxyethylthiazole (THZ). The polypeptide is Hydroxyethylthiazole kinase 1 (Clostridium botulinum (strain Langeland / NCTC 10281 / Type F)).